Reading from the N-terminus, the 468-residue chain is Hepatocyte nuclear factor 3-alpha (468 aa).

The fork-head DNA-binding region spans Ala-169 to Leu-260. The essential for DNA binding stretch occupies residues Gly-251–Glu-288. The segment at Glu-269–Phe-396 is disordered. Over residues Gly-273–Gly-285 the composition is skewed to gly residues. Ser-303 and Ser-327 each carry phosphoserine. Composition is skewed to low complexity over residues Gly-318–Pro-328 and Ser-347–Ser-365.

Binds DNA as a monomer. Interacts with FOXA2. Interacts with NKX2-1. Interacts with HDAC7. Interacts with the histone H3-H4 heterodimer. Associates with nucleosomes containing histone H2A. Interacts with AR. Interacts with NR0B2. Restricted mainly to endoderm-derived tissues (lung, liver, stomach, and small intestine). Expressed in the prostate.

The protein resides in the nucleus. Transcription factor that is involved in embryonic development, establishment of tissue-specific gene expression and regulation of gene expression in differentiated tissues. Is thought to act as a 'pioneer' factor opening the compacted chromatin for other proteins through interactions with nucleosomal core histones and thereby replacing linker histones at target enhancer and/or promoter sites. Binds DNA with the consensus sequence 5'-[AC]A[AT]T[AG]TT[GT][AG][CT]T[CT]-3'. Proposed to play a role in translating the epigenetic signatures into cell type-specific enhancer-driven transcriptional programs. Involved in the development of multiple endoderm-derived organ systems such as the liver, pancreas, lungs and prostate; FOXA1 and FOXA2 seem to have at least in part redundant roles. Plays a role in prostate morphogenesis and epithelial cell differentiation. FOXA1 and FOXA2 are essential for hepatic specification. FOXA1 and FOXA2 are required for morphogenesis and cell differentiation during formation of the lung. FOXA1 and FOXA2 are involved in bile duct formation; they positively regulate the binding of glucocorticoid receptor/NR3C1 to the IL6 promoter. FOXA1 and FOXA2 regulate multiple phases of midbrain dopaminergic neuron development; they regulate expression of NEUROG2 at the beginning of mDA neurogenesis and of NR4A2 and EN1 in immature mDA neurons. Modulates the transcriptional activity of nuclear hormone receptors. Is involved in ESR1-mediated transcription. Inhibits NKX2-1-mediated transcription from the SFTPC promoter in lung epithel independently from DNA-binding. Involved in regulation of apoptosis. Involved in cell cycle regulation. Originally described as a transcription activator for a number of liver genes such as AFP, albumin, tyrosine aminotransferase, PEPCK, etc. Interacts with the cis-acting regulatory regions of these genes. Involved in glucose homeostasis; activates the GCG promoter. The protein is Hepatocyte nuclear factor 3-alpha (Foxa1) of Mus musculus (Mouse).